Reading from the N-terminus, the 130-residue chain is Cyclin-dependent kinase 4 inhibitor B (130 aa).

4 ANK repeats span residues 5 to 34 (GSDAGLATAAARGQVETVRQLLEAGADPNA), 38 to 66 (FGRRPIQVMMMGSAQVAELLLLHGAEPNC), 71 to 100 (TLTRPVHDAAREGFLDTLMVLHKAGARLDV), and 104 to 130 (WGRLPVDLAEEQGHRDIARYLHAATGD). Thr12 is subject to Phosphothreonine.

Belongs to the CDKN2 cyclin-dependent kinase inhibitor family. Heterodimer of CDKN2B with CDK4 or CDK6. Expression abundant in lung, less abundant in testis, barely detectable in liver, and not detectable in neonatal kidney, adult kidney, brain, heart, or spleen.

Functionally, interacts strongly with CDK4 and CDK6. Potent inhibitor. Potential effector of TGF-beta induced cell cycle arrest. In Rattus norvegicus (Rat), this protein is Cyclin-dependent kinase 4 inhibitor B (Cdkn2b).